We begin with the raw amino-acid sequence, 297 residues long: RNA polymerase sigma-F factor (297 aa).

The segment at 1 to 46 is disordered; sequence MTVPASTAPQVPPQQDPQVPHPQEPREEPHEEPPSPPAAPRPQSRG. Pro residues predominate over residues 10 to 22; the sequence is QVPPQQDPQVPHP. A compositionally biased stretch (basic and acidic residues) spans 23-33; sequence QEPREEPHEEP. A Polymerase core binding motif is present at residues 101 to 114; the sequence is DVVQVGTIGLINAI. The H-T-H motif DNA-binding region spans 264–283; it reads QSQISAELGVSQMHVSRLLA.

It belongs to the sigma-70 factor family. SigB subfamily.

Sigma factors are initiation factors that promote the attachment of RNA polymerase to specific initiation sites and are then released. This sigma factor is required for normal spore maturation. The protein is RNA polymerase sigma-F factor (sigF) of Kitasatospora aureofaciens (Streptomyces aureofaciens).